A 544-amino-acid polypeptide reads, in one-letter code: Esterase P (544 aa).

An N-terminal signal peptide occupies residues 1–19; it reads MSIFKRLLCLTLLWIAALE. Asn-75 carries an N-linked (GlcNAc...) asparagine glycan. A disulfide bond links Cys-83 and Cys-102. Residue Asn-114 is glycosylated (N-linked (GlcNAc...) asparagine). The active-site Acyl-ester intermediate is Ser-206. Cysteines 258 and 270 form a disulfide. Residues Asn-262 and Asn-456 are each glycosylated (N-linked (GlcNAc...) asparagine). The Charge relay system role is filled by His-466. A disulfide bridge links Cys-514 with Cys-535.

Belongs to the type-B carboxylesterase/lipase family. As to quaternary structure, monomer.

The protein localises to the secreted. The enzyme catalyses a carboxylic ester + H2O = an alcohol + a carboxylate + H(+). This is Esterase P (Est-P) from Drosophila melanogaster (Fruit fly).